The following is a 302-amino-acid chain: MMLSKKNSETLENFSEKLEVEGRSLWQDARRRFMHNRAAVASLIVLVLIALFVILAPMLSQFAYDDTDWAMMSSAPDMESGHYFGTDSSGRDLLVRVAIGGRISLMVGVAAALVAVVVGTLYGSLSGYLGGKVDSVMMRLLEILNSFPFMFFVILLVTFFGQNILLIFVAIGMVSWLDMARIVRGQTLSLKRKEFIEAAQVGGVSTSGIVIRHIVPNVLGVVVVYASLLVPSMILFESFLSFLGLGTQEPLSSWGALLSDGANSMEVSPWLLLFPAGFLVVTLFCFNFIGDGLRDALDPKDR.

The Cytoplasmic portion of the chain corresponds to 1 to 38; that stretch reads MMLSKKNSETLENFSEKLEVEGRSLWQDARRRFMHNRA. Residues 39 to 59 form a helical membrane-spanning segment; that stretch reads AVASLIVLVLIALFVILAPML. Topologically, residues 60–102 are periplasmic; the sequence is SQFAYDDTDWAMMSSAPDMESGHYFGTDSSGRDLLVRVAIGGR. Positions 101 to 290 constitute an ABC transmembrane type-1 domain; that stretch reads GRISLMVGVA…VTLFCFNFIG (190 aa). Residues 103 to 123 traverse the membrane as a helical segment; the sequence is ISLMVGVAAALVAVVVGTLYG. At 124–137 the chain is on the cytoplasmic side; that stretch reads SLSGYLGGKVDSVM. The helical transmembrane segment at 138-160 threads the bilayer; sequence MRLLEILNSFPFMFFVILLVTFF. The Periplasmic portion of the chain corresponds to 161-163; the sequence is GQN. Residues 164-183 traverse the membrane as a helical segment; the sequence is ILLIFVAIGMVSWLDMARIV. At 184-213 the chain is on the cytoplasmic side; that stretch reads RGQTLSLKRKEFIEAAQVGGVSTSGIVIRH. The chain crosses the membrane as a helical span at residues 214–234; sequence IVPNVLGVVVVYASLLVPSMI. Topologically, residues 235-269 are periplasmic; it reads LFESFLSFLGLGTQEPLSSWGALLSDGANSMEVSP. The chain crosses the membrane as a helical span at residues 270-290; sequence WLLLFPAGFLVVTLFCFNFIG. Topologically, residues 291-302 are cytoplasmic; sequence DGLRDALDPKDR.

It belongs to the binding-protein-dependent transport system permease family. OppBC subfamily. In terms of assembly, the complex is composed of two ATP-binding proteins (OppD and OppF), two transmembrane proteins (OppB and OppC) and a solute-binding protein (OppA).

It localises to the cell inner membrane. Functionally, part of the ABC transporter complex OppABCDF involved in the uptake of oligopeptides. Probably responsible for the translocation of the substrate across the membrane. This chain is Oligopeptide transport system permease protein OppC (oppC), found in Escherichia coli O157:H7.